The primary structure comprises 127 residues: Fluoride-specific ion channel FluC (127 aa).

The next 4 membrane-spanning stretches (helical) occupy residues 4 to 24, 39 to 59, 68 to 88, and 102 to 122; these read LDYL…YLVS, GTII…FAAI, AILF…TFTY, and VAYA…GMIL. Na(+) is bound by residues Gly-78 and Thr-81.

It belongs to the fluoride channel Fluc/FEX (TC 1.A.43) family.

Its subcellular location is the cell inner membrane. It carries out the reaction fluoride(in) = fluoride(out). Its activity is regulated as follows. Na(+) is not transported, but it plays an essential structural role and its presence is essential for fluoride channel function. In terms of biological role, fluoride-specific ion channel. Important for reducing fluoride concentration in the cell, thus reducing its toxicity. This chain is Fluoride-specific ion channel FluC, found in Thermotoga maritima (strain ATCC 43589 / DSM 3109 / JCM 10099 / NBRC 100826 / MSB8).